The primary structure comprises 394 residues: Elongation factor Tu (394 aa).

A tr-type G domain is found at Lys10 to Glu204. Residues Gly19–Thr26 are G1. Position 19–26 (Gly19–Thr26) interacts with GTP. Residue Thr26 coordinates Mg(2+). The interval Gly60–Asn64 is G2. The tract at residues Asp81 to Gly84 is G3. GTP-binding positions include Asp81–His85 and Asn136–Asp139. The tract at residues Asn136–Asp139 is G4. Positions Ser174–Leu176 are G5.

The protein belongs to the TRAFAC class translation factor GTPase superfamily. Classic translation factor GTPase family. EF-Tu/EF-1A subfamily. Monomer.

It localises to the cytoplasm. It carries out the reaction GTP + H2O = GDP + phosphate + H(+). GTP hydrolase that promotes the GTP-dependent binding of aminoacyl-tRNA to the A-site of ribosomes during protein biosynthesis. The chain is Elongation factor Tu from Staphylococcus haemolyticus (strain JCSC1435).